The primary structure comprises 352 residues: Holliday junction branch migration complex subunit RuvB (352 aa).

Residues 13–201 form a large ATPase domain (RuvB-L) region; the sequence is LPLRKKELRL…FGISQKIEFY (189 aa). Residues Arg-41, Gly-82, Lys-85, Thr-86, Thr-87, 148 to 150, Arg-191, Tyr-201, and Arg-238 each bind ATP; that span reads EDF. Thr-86 lines the Mg(2+) pocket. The segment at 202–273 is small ATPAse domain (RuvB-S); sequence NYDELKQILL…LIKKALNSYQ (72 aa). A head domain (RuvB-H) region spans residues 276–352; it reads DKGLDSLDRH…KYIDSKNDDF (77 aa). Residues Arg-330 and Arg-335 each contribute to the DNA site.

The protein belongs to the RuvB family. As to quaternary structure, homohexamer. Forms an RuvA(8)-RuvB(12)-Holliday junction (HJ) complex. HJ DNA is sandwiched between 2 RuvA tetramers; dsDNA enters through RuvA and exits via RuvB. An RuvB hexamer assembles on each DNA strand where it exits the tetramer. Each RuvB hexamer is contacted by two RuvA subunits (via domain III) on 2 adjacent RuvB subunits; this complex drives branch migration. In the full resolvosome a probable DNA-RuvA(4)-RuvB(12)-RuvC(2) complex forms which resolves the HJ.

It is found in the cytoplasm. It carries out the reaction ATP + H2O = ADP + phosphate + H(+). Functionally, the RuvA-RuvB-RuvC complex processes Holliday junction (HJ) DNA during genetic recombination and DNA repair, while the RuvA-RuvB complex plays an important role in the rescue of blocked DNA replication forks via replication fork reversal (RFR). RuvA specifically binds to HJ cruciform DNA, conferring on it an open structure. The RuvB hexamer acts as an ATP-dependent pump, pulling dsDNA into and through the RuvAB complex. RuvB forms 2 homohexamers on either side of HJ DNA bound by 1 or 2 RuvA tetramers; 4 subunits per hexamer contact DNA at a time. Coordinated motions by a converter formed by DNA-disengaged RuvB subunits stimulates ATP hydrolysis and nucleotide exchange. Immobilization of the converter enables RuvB to convert the ATP-contained energy into a lever motion, pulling 2 nucleotides of DNA out of the RuvA tetramer per ATP hydrolyzed, thus driving DNA branch migration. The RuvB motors rotate together with the DNA substrate, which together with the progressing nucleotide cycle form the mechanistic basis for DNA recombination by continuous HJ branch migration. Branch migration allows RuvC to scan DNA until it finds its consensus sequence, where it cleaves and resolves cruciform DNA. The chain is Holliday junction branch migration complex subunit RuvB from Prochlorococcus marinus (strain MIT 9301).